A 429-amino-acid chain; its full sequence is Glutamate-1-semialdehyde 2,1-aminomutase (429 aa).

The residue at position 267 (Lys267) is an N6-(pyridoxal phosphate)lysine.

It belongs to the class-III pyridoxal-phosphate-dependent aminotransferase family. HemL subfamily. Homodimer. Pyridoxal 5'-phosphate is required as a cofactor.

It is found in the cytoplasm. It carries out the reaction (S)-4-amino-5-oxopentanoate = 5-aminolevulinate. It functions in the pathway porphyrin-containing compound metabolism; protoporphyrin-IX biosynthesis; 5-aminolevulinate from L-glutamyl-tRNA(Glu): step 2/2. In Xanthomonas axonopodis pv. citri (strain 306), this protein is Glutamate-1-semialdehyde 2,1-aminomutase.